Consider the following 2215-residue polypeptide: MVILQKGDYVWMDLKSGQEFDVPIGAVVKLCDSGQIQVVDDEDNEHWISPQNATHIKPMHPTSVHGVEDMIRLGDLNEAGILRNLLIRYRDHLIYTYTGSILVAVNPYQLLSIYSPEHIRQYTNKKIGEMPPHIFAIADNCYFNMKRNNRDQCCIISGESGAGKTESTKLILQFLAAISGQHSWIEQQVLEATPILEAFGNAKTIRNDNSSRFGKYIDIHFNKRGAIEGAKIEQYLLEKSRVCRQAPDERNYHVFYCMLEGMNEEEKKKLGLGQAADYNYLAMGNCITCEGRVDSQEYANIRSAMKVLMFTDTENWEISKLLAAILHMGNLQYEARTFENLDACEVLFSPSLATAASLLEVNPPDLMSCLTSRTLITRGETVSTPLSREQALDVRDAFVKGIYGRLFVWIVEKINAAIYKPPPLEVKNSRRSIGLLDIFGFENFTVNSFEQLCINFANEHLQQFFVRHVFKLEQEEYDLESIDWLHIEFTDNQEALDMIANRPMNVISLIDEESKFPKGTDATMLHKLNSQHKLNANYVPPKNSHETQFGINHFAGVVYYESQGFLEKNRDTLHGDIIQLVHSSRNKFIKQIFQADVAMGAETRKRSPTLSSQFKRSLELLMRTLGACQPFFVRCIKPNEFKKPMLFDRHLCVRQLRYSGMMETIRIRHAGYPIRYSFVEFVERYRVLLPGVKPAYKQGDLRGTCQRMAEAVLGTHDDWQIGKTKIFLKDHHDMLLEVERDKAITDRVILLQKVIRGFKDRSNFLRLKSAATLIQRHWRGHHCRKNYELIRLGFLRLQALHRSRKLHKQYRLARQRIIEFQARCRAYLVRKAFRHRLWAVITVQAYARGMIARRLHRRLRVEYQRRLEAERMRLAEEEKLRKEMSAKKAKEEAERKHQERLAQLAREDAERELKEKEEARRKKELLEQMEKARHEPINHSDMVDKMFGFLGTSGSLPGQEGQAPSGFEDLERGRREMVEEDVDAALPLPDEDEEDLSEYKFAKFAATYFQGTTTHSYTRRPLKQPLLYHDDEGDQLAALAVWITILRFMGDLPEPKYHTAMSDGSEKIPVMTKIYETLGKKTYKRELQALQGEGETQLPEGQKKTSVRHKLVHLTLKKKSKLTEEVTKRLNDGESTVQGNSMLEDRPTSNLEKLHFIIGNGILRPALRDEIYCQISKQLTHNPSKSSYARGWILVSLCVGCFAPSEKFVKYLRNFIHGGPPGYAPYCEERLRRTFVNGTRTQPPSWLELQATKSKKPIMLPVTFMDGTTKTLLTDSATTARELCNALADKISLKDRFGFSLYIALFDKVSSLGSGSDHVMDAISQCEQYAKEQGAQERNAPWRLFFRKEVFTPWHNPSEDNVATNLIYQQVVRGVKFGEYRCEKEDDLAELASQQYFVDYGSEMILERLLSLVPTYIPDREITPLKNLEKWAQLAIAAHKKGIYAQRRTDSQKVKEDVVNYARFKWPLLFSRFYEAYKFSGPPLPKSDVIVAVNWTGVYFVDEQEQVLLELSFPEIMAVSSSRECRVLLSLGCSDLGCATCQSGRAGLTPAGPCSPCWSCRGTKMMAPSFTLATIKGDEYTFTSSNAEDIRDLVVTFLEGLRKRSKYVVALQDNPNPAGEESGFLSFAKGDLIILDHDTGEQVMNSGWANGINERTKQRGDFPTDCVYVMPTVTLPPREIVALVTMTPDQRQDVVRLLQLRTAEPEVRAKPYTLEEFSYDYFRPPPKHTLSRVMVSKARGKDRLWSHTREPLKQALLKKILGSEELSQEACMAFVAVLKYMGDYPSKRMRSVNELTDQIFEWALKAEPLKDEAYVQILKQLTDNHIRYSEERGWELLWLCTGLFPPSNILLPHVQRFLQSRKHCPLAIDCLQRLQKALRNGSRKYPPHLVEVEAIQHKTTQIFHKVYFPDDTDEAFEVESSTKAKDFCQNIASRLLLKSSEGFSLFVKIADKVISVPENDFFFDFVRHLTDWIKKARPIKDGIVPSLTYQVFFMKKLWTTTVPGKDPMADSIFHYYQELPKYLRGYHKCTREEVLQLGALIYRVKFEEDKSYFPSIPKLLRELVPQDLIRQVSPDDWKRSIVAYFNKHAGKSKEEAKLAFLKLIFKWPTFGSAFFEVKQTTEPNFPEILLIAINKYGVSLIDPRTKDILTTHPFTKISNWSSGNTYFHITIGNLVRGSKLLCETSLGYKMDDLLTSYISQMLTAMSKQRNSRSGR.

A Myosin motor domain is found at 65–741; it reads HGVEDMIRLG…HDMLLEVERD (677 aa). 158 to 165 contacts ATP; that stretch reads GESGAGKT. Residues 632–639 form an actin-binding region; sequence FVRCIKPN. IQ domains follow at residues 745-765, 768-788, 791-811, 814-834, and 837-857; these read TDRVILLQKVIRGFKDRSNFL, KSAATLIQRHWRGHHCRKNYE, RLGFLRLQALHRSRKLHKQYR, RQRIIEFQARCRAYLVRKAFR, and LWAVITVQAYARGMIARRLHR. The SAH stretch occupies residues 858–935; sequence RLRVEYQRRL…LEQMEKARHE (78 aa). Residues 1017-1253 enclose the MyTH4 1 domain; the sequence is YTRRPLKQPL…PSWLELQATK (237 aa). The 345-residue stretch at 1258-1602 folds into the FERM 1 domain; it reads IMLPVTFMDG…LVVTFLEGLR (345 aa). T1563 carries the phosphothreonine modification. The residue at position 1569 (S1569) is a Phosphoserine. T1571 carries the phosphothreonine modification. Residues 1603–1672 form the SH3 domain; that stretch reads KRSKYVVALQ…PTDCVYVMPT (70 aa). One can recognise a MyTH4 2 domain in the interval 1747–1896; that stretch reads HTREPLKQAL…PHLVEVEAIQ (150 aa). One can recognise an FERM 2 domain in the interval 1902-2205; the sequence is IFHKVYFPDD…SYISQMLTAM (304 aa).

The protein belongs to the TRAFAC class myosin-kinesin ATPase superfamily. Myosin family. As to quaternary structure, might homodimerize in a two headed molecule through the formation of a coiled-coil rod. Identified in a complex with USH1C and USH1G. Interacts with MYRIP. Interacts with RPE65. Interacts with CIB2. May interact with CALM. Interacts with WHRN. Interacts with PLEKHB1 (via PH domain). Interacts with PCDH15. Interacts with TWF2. Interacts with USH1G. Interacts with MYH9. Interacts (via MyTH4-FERM domains) with cytoplasmic regions of ADGRV1 and USH2A. Interacts with PDZD7 (via MyTH4-FERM domains). Interacts with CALML4. Detected in mechanosensory stereocilia of cochlea hair cells (at protein level). Expressed in the retina, cochlea, kidney and liver.

It is found in the cytoplasm. The protein localises to the cell cortex. It localises to the cytoskeleton. The protein resides in the synapse. In terms of biological role, myosins are actin-based motor molecules with ATPase activity. Unconventional myosins serve in intracellular movements. Their highly divergent tails bind to membranous compartments, which are then moved relative to actin filaments. In the retina, plays an important role in the renewal of the outer photoreceptor disks. Plays an important role in the distribution and migration of retinal pigment epithelial (RPE) melanosomes and phagosomes, and in the regulation of opsin transport in retinal photoreceptors. Mediates intracellular transport of RPE65 in the retina pigment epithelium. In the inner ear, plays an important role in differentiation, morphogenesis and organization of cochlear hair cell bundles. Motor protein that is a part of the functional network formed by USH1C, USH1G, CDH23 and MYO7A that mediates mechanotransduction in cochlear hair cells. Required for normal hearing. Involved in hair-cell vesicle trafficking of aminoglycosides, which are known to induce ototoxicity. The sequence is that of Unconventional myosin-VIIa (Myo7a) from Mus musculus (Mouse).